Consider the following 348-residue polypeptide: DnaJ homolog subfamily B member 5 (348 aa).

A J domain is found at 4–68; that stretch reads DYYKILGIPS…KKRGLYDQYG (65 aa).

The sequence is that of DnaJ homolog subfamily B member 5 (DNAJB5) from Bos taurus (Bovine).